The chain runs to 87 residues: Mitochondrial import inner membrane translocase subunit TIM8 (87 aa).

Residues 44 to 68 carry the Twin CX3C motif motif; it reads CFKKCISRVDNGNLSSQEEECLASC. 2 cysteine pairs are disulfide-bonded: cysteine 44–cysteine 68 and cysteine 48–cysteine 64.

It belongs to the small Tim family. Heterohexamer; composed of 3 copies of TIM8 and 3 copies of TIM13, named soluble 70 kDa complex. Associates with the TIM22 complex, whose core is composed of TIM22 and TIM54. Interacts with the transmembrane regions of multi-pass transmembrane proteins in transit.

It localises to the mitochondrion inner membrane. In terms of biological role, mitochondrial intermembrane chaperone that participates in the import and insertion of some multi-pass transmembrane proteins into the mitochondrial inner membrane. Also required for the transfer of beta-barrel precursors from the TOM complex to the sorting and assembly machinery (SAM complex) of the outer membrane. Acts as a chaperone-like protein that protects the hydrophobic precursors from aggregation and guide them through the mitochondrial intermembrane space. The TIM8-TIM13 complex is non essential and only mediates the import of few proteins, while the predominant TIM9-TIM10 70 kDa complex is crucial and mediates the import of much more proteins. In Candida glabrata (strain ATCC 2001 / BCRC 20586 / JCM 3761 / NBRC 0622 / NRRL Y-65 / CBS 138) (Yeast), this protein is Mitochondrial import inner membrane translocase subunit TIM8 (TIM8).